The sequence spans 358 residues: Branched-chain amino acid aminotransferase gloG (358 aa).

R91 contributes to the pyridoxal 5'-phosphate binding site. Catalysis depends on K195, which acts as the Proton acceptor. Residue K195 is modified to N6-(pyridoxal phosphate)lysine. Position 231 (E231) interacts with pyridoxal 5'-phosphate.

It belongs to the class-IV pyridoxal-phosphate-dependent aminotransferase family. Requires pyridoxal 5'-phosphate as cofactor.

It catalyses the reaction L-isoleucine + 2-oxoglutarate = (S)-3-methyl-2-oxopentanoate + L-glutamate. The catalysed reaction is L-leucine + 2-oxoglutarate = 4-methyl-2-oxopentanoate + L-glutamate. It carries out the reaction L-valine + 2-oxoglutarate = 3-methyl-2-oxobutanoate + L-glutamate. Its pathway is mycotoxin biosynthesis. Functionally, branched-chain amino acid aminotransferase; part of the gene cluster that mediates the biosynthesis of pneumocandins, lipohexapeptides of the echinocandin family that prevent fungal cell wall formation by non-competitive inhibition of beta-1,3-glucan synthase. The 10,12-dimethylmyristoyl side chain is synthesized by the reducing polyketide synthase gloL/GLPKS4. The thioesterase gloN/GLHYD exclusively interacts with gloL/GLPKS4 to maintain turnover of the polyketide side chain. The 10R,12S-dimethylmyristic acid is then transferred to the first thiolation domain of the nonribosomal peptide synthetase gloA/GLNRPS4 by the acyl-AMP ligase gloD/GLligase, followed by its acylation to L-ornithine to trigger elongation of the cyclic hexapeptide. L-ornithine, 4R-hydroxyl-L-proline (generated from L-proline by the dioxygenase gloF/GLOXY2), 3S-hydroxyl-L-homotyrosine (generated by gloG/GLHtyB, gloH/GLHtyA, gloI/GLHtyC, gloJ/GLHtyD and hydroxylated at C-3 by the dioxygenase gloM/GLOXY1), 3R-hydroxyl-L-glutamine (generated from L-glutamine probably by the dioxygenase gloE/GLOXY3) and 3S-hydroxyl-L-proline (generated from L-proline by the dioxygenase gloF/GLOXY2 to yield pneumocandin B0), or 3S-hydroxyl-4S-methyl-L-proline (generated from L-leucine by the dioxygenase gloC/GLOXY4 to yield pneumocandin A0) are sequentially added to the growing chain. The last C domain of gloA/GLNRPS4 is proposed to be responsible for cyclization by condensation to form the peptide bond between L-ornithine and 3S-hydroxyl-4S-methyl-L-proline (for pneumocandin A0) or 3S-hydroxyl-L-proline (for pneumocandin B0). Finally, the subsequent C-4 hydroxylation of 3S-hydroxyl-L-homotyrosine and L-ornithine dihydroxylation at C-4 and C-5 are performed by the cytochrome P450 monooxygenases gloP/GLP450-1 and gloO/GLP450-2, respectively. This Glarea lozoyensis (strain ATCC 20868 / MF5171) protein is Branched-chain amino acid aminotransferase gloG.